We begin with the raw amino-acid sequence, 92 residues long: Beta-2-microglobulin (92 aa).

The region spanning 2–89 (PQIQVYSRHP…NHVSMDKPMT (88 aa)) is the Ig-like C1-type domain. Cysteine 22 and cysteine 77 are joined by a disulfide.

Belongs to the beta-2-microglobulin family. In terms of assembly, heterodimer of an alpha chain and a beta chain. Beta-2-microglobulin is the beta-chain of major histocompatibility complex class I molecules.

The protein localises to the secreted. Functionally, component of the class I major histocompatibility complex (MHC). Involved in the presentation of peptide antigens to the immune system. The polypeptide is Beta-2-microglobulin (B2m) (Mus spretus (Western Mediterranean mouse)).